Here is a 366-residue protein sequence, read N- to C-terminus: Protein RecA (366 aa).

77–84 is a binding site for ATP; that stretch reads GPESSGKT. Positions 346 to 366 are disordered; sequence IGGPGGEDDDAGGAAGVGDEA.

The protein belongs to the RecA family.

It is found in the cytoplasm. In terms of biological role, can catalyze the hydrolysis of ATP in the presence of single-stranded DNA, the ATP-dependent uptake of single-stranded DNA by duplex DNA, and the ATP-dependent hybridization of homologous single-stranded DNAs. It interacts with LexA causing its activation and leading to its autocatalytic cleavage. The polypeptide is Protein RecA (Rhodospirillum rubrum (strain ATCC 11170 / ATH 1.1.1 / DSM 467 / LMG 4362 / NCIMB 8255 / S1)).